The sequence spans 513 residues: Aspartyl protease family protein 1 (513 aa).

The first 21 residues, 1 to 21 (MVWYSSCRILFLGLLILLASS), serve as a signal peptide directing secretion. Residues 104 to 445 (HYANVTVGTP…DREKLILGWK (342 aa)) form the Peptidase A1 domain. Catalysis depends on residues aspartate 122 and aspartate 327. Positions 452 to 488 (GETSARTLPSNRSSSSARPPASSFDPEATNIPSQRPN) are disordered. The span at 455 to 474 (SARTLPSNRSSSSARPPASS) shows a compositional bias: low complexity. Residue serine 484 is the site of GPI-anchor amidated serine attachment. The propeptide at 485–513 (QRPNTSTTSAAYSLSISLSLFFFSILAIL) is removed in mature form.

Belongs to the peptidase A1 family.

The protein localises to the cell membrane. Its function is as follows. Aspartyl protease. Not able to cleave BAG6. The protein is Aspartyl protease family protein 1 of Arabidopsis thaliana (Mouse-ear cress).